The sequence spans 122 residues: Histone H2B, gonadal (122 aa).

Positions Met1–Lys31 are disordered. N,N-dimethylproline is present on Pro2. Residue Ser109 is glycosylated (O-linked (GlcNAc) serine). Lys117 is covalently cross-linked (Glycyl lysine isopeptide (Lys-Gly) (interchain with G-Cter in ubiquitin)).

This sequence belongs to the histone H2B family. In terms of assembly, the nucleosome is a histone octamer containing two molecules each of H2A, H2B, H3 and H4 assembled in one H3-H4 heterotetramer and two H2A-H2B heterodimers. The octamer wraps approximately 147 bp of DNA. In terms of processing, monoubiquitination of Lys-117 gives a specific tag for epigenetic transcriptional activation and is also prerequisite for histone H3 'Lys-4' and 'Lys-79' methylation. Post-translationally, glcNAcylation at Ser-109 promotes monoubiquitination of Lys-117. It fluctuates in response to extracellular glucose, and associates with transcribed genes.

The protein localises to the nucleus. Its subcellular location is the chromosome. Core component of nucleosome. Nucleosomes wrap and compact DNA into chromatin, limiting DNA accessibility to the cellular machineries which require DNA as a template. Histones thereby play a central role in transcription regulation, DNA repair, DNA replication and chromosomal stability. DNA accessibility is regulated via a complex set of post-translational modifications of histones, also called histone code, and nucleosome remodeling. The sequence is that of Histone H2B, gonadal from Asterias rubens (Common European starfish).